A 379-amino-acid polypeptide reads, in one-letter code: Acyl-CoA dehydrogenase (379 aa).

Belongs to the acyl-CoA dehydrogenase family. The cofactor is FAD.

It carries out the reaction a 2,3-saturated acyl-CoA + A = a 2,3-dehydroacyl-CoA + AH2. The sequence is that of Acyl-CoA dehydrogenase (mmgC) from Bacillus subtilis (strain 168).